The chain runs to 273 residues: Large ribosomal subunit protein uL2cz/uL2cy (273 aa).

2 disordered regions span residues 1–22 (MAKH…DRQV) and 225–273 (PVDH…RRRK).

Belongs to the universal ribosomal protein uL2 family. As to quaternary structure, part of the 50S ribosomal subunit.

It localises to the plastid. The protein resides in the chloroplast. This chain is Large ribosomal subunit protein uL2cz/uL2cy (rpl2-A), found in Zea mays (Maize).